Here is a 657-residue protein sequence, read N- to C-terminus: Endoplasmic reticulum mannosyl-oligosaccharide 1,2-alpha-mannosidase (657 aa).

Residues M1–N49 lie on the Cytoplasmic side of the membrane. The chain crosses the membrane as a helical span at residues V50–S70. Residues D71–A657 are Lumenal-facing. S101 is modified (phosphoserine). The segment at H118–E157 is disordered. Residues G138–E157 show a composition bias toward basic and acidic residues. The active-site Proton donor is the E288. D421 is a catalytic residue. The cysteines at positions 485 and 514 are disulfide-linked. The Proton donor role is filled by E528. E557 is an active-site residue. Residue T646 participates in Ca(2+) binding.

It belongs to the glycosyl hydrolase 47 family. It depends on Ca(2+) as a cofactor.

It localises to the endoplasmic reticulum membrane. It catalyses the reaction N(4)-(alpha-D-Man-(1-&gt;2)-alpha-D-Man-(1-&gt;2)-alpha-D-Man-(1-&gt;3)-[alpha-D-Man-(1-&gt;2)-alpha-D-Man-(1-&gt;3)-[alpha-D-Man-(1-&gt;2)-alpha-D-Man-(1-&gt;6)]-alpha-D-Man-(1-&gt;6)]-beta-D-Man-(1-&gt;4)-beta-D-GlcNAc-(1-&gt;4)-beta-D-GlcNAc)-L-asparaginyl-[protein] (N-glucan mannose isomer 9A1,2,3B1,2,3) + 4 H2O = N(4)-(alpha-D-Man-(1-&gt;3)-[alpha-D-Man-(1-&gt;3)-[alpha-D-Man-(1-&gt;6)]-alpha-D-Man-(1-&gt;6)]-beta-D-Man-(1-&gt;4)-beta-D-GlcNAc-(1-&gt;4)-beta-D-GlcNAc)-L-asparaginyl-[protein] (N-glucan mannose isomer 5A1,2) + 4 beta-D-mannose. The enzyme catalyses N(4)-(alpha-D-Man-(1-&gt;2)-alpha-D-Man-(1-&gt;2)-alpha-D-Man-(1-&gt;3)-[alpha-D-Man-(1-&gt;3)-[alpha-D-Man-(1-&gt;2)-alpha-D-Man-(1-&gt;6)]-alpha-D-Man-(1-&gt;6)]-beta-D-Man-(1-&gt;4)-beta-D-GlcNAc-(1-&gt;4)-beta-D-GlcNAc)-L-asparaginyl-[protein] (N-glucan mannose isomer 8A1,2,3B1,3) + 3 H2O = N(4)-(alpha-D-Man-(1-&gt;3)-[alpha-D-Man-(1-&gt;3)-[alpha-D-Man-(1-&gt;6)]-alpha-D-Man-(1-&gt;6)]-beta-D-Man-(1-&gt;4)-beta-D-GlcNAc-(1-&gt;4)-beta-D-GlcNAc)-L-asparaginyl-[protein] (N-glucan mannose isomer 5A1,2) + 3 beta-D-mannose. Its pathway is protein modification; protein glycosylation. Functionally, involved in glycoprotein quality control targeting of misfolded glycoproteins for degradation. It primarily trims a single alpha-1,2-linked mannose residue from Man(9)GlcNAc(2) to produce Man(8)GlcNAc(2), but at high enzyme concentrations, as found in the ER quality control compartment (ERQC), it further trims the carbohydrates to Man(5-6)GlcNAc(2). This is Endoplasmic reticulum mannosyl-oligosaccharide 1,2-alpha-mannosidase (Man1b1) from Rattus norvegicus (Rat).